The chain runs to 361 residues: DNA replication and repair protein RecF (361 aa).

Position 30–37 (30–37 (GPNGSGKT)) interacts with ATP.

This sequence belongs to the RecF family.

Its subcellular location is the cytoplasm. In terms of biological role, the RecF protein is involved in DNA metabolism; it is required for DNA replication and normal SOS inducibility. RecF binds preferentially to single-stranded, linear DNA. It also seems to bind ATP. This is DNA replication and repair protein RecF from Erwinia tasmaniensis (strain DSM 17950 / CFBP 7177 / CIP 109463 / NCPPB 4357 / Et1/99).